A 150-amino-acid polypeptide reads, in one-letter code: Large ribosomal subunit protein bL9 (150 aa).

Belongs to the bacterial ribosomal protein bL9 family.

Its function is as follows. Binds to the 23S rRNA. The chain is Large ribosomal subunit protein bL9 from Herminiimonas arsenicoxydans.